The chain runs to 409 residues: Ligand-gated cation channel ZACN (409 aa).

Residues M1–T18 form the signal peptide. At G19–A233 the chain is on the extracellular side. 2 N-linked (GlcNAc...) asparagine glycosylation sites follow: N55 and N99. A disulfide bridge connects residues C157 and C171. Residues I234–L254 form a helical membrane-spanning segment. Topologically, residues P255–K265 are cytoplasmic. A helical transmembrane segment spans residues V266–S286. Topologically, residues S287–Y296 are extracellular. A helical transmembrane segment spans residues F297 to L317. Topologically, residues Q318–H365 are cytoplasmic. A disordered region spans residues A325–K354. Residues E336–K354 are compositionally biased toward basic and acidic residues. Residues I366 to W386 form a helical membrane-spanning segment. At M387–L409 the chain is on the extracellular side.

Belongs to the ligand-gated ion channel (TC 1.A.9) family. Post-translationally, glycosylated.

The protein resides in the cell membrane. The catalysed reaction is Na(+)(in) = Na(+)(out). The enzyme catalyses K(+)(in) = K(+)(out). Ligand-gated cation channel that allows the movement of sodium and potassium monoatomic cations across cell membranes when activated by zinc (Zn2+), copper (Cu2+), and changes in pH. Could also transport cesium. The polypeptide is Ligand-gated cation channel ZACN (Canis lupus familiaris (Dog)).